The sequence spans 368 residues: uncharacterized protein (368 aa).

An N-terminal signal peptide occupies residues 1 to 19; sequence MHVSMIIFVSIFSIKYIMA. N-linked (GlcNAc...) asparagine; by host glycans are attached at residues Asn99, Asn170, Asn266, and Asn295.

This is an uncharacterized protein from Ostreid herpesvirus 1 (isolate France) (OsHV-1).